Consider the following 537-residue polypeptide: 2-succinyl-5-enolpyruvyl-6-hydroxy-3-cyclohexene-1-carboxylate synthase (537 aa).

Belongs to the TPP enzyme family. MenD subfamily. In terms of assembly, homodimer. Mg(2+) serves as cofactor. Requires Mn(2+) as cofactor. The cofactor is thiamine diphosphate.

The catalysed reaction is isochorismate + 2-oxoglutarate + H(+) = 5-enolpyruvoyl-6-hydroxy-2-succinyl-cyclohex-3-ene-1-carboxylate + CO2. It participates in quinol/quinone metabolism; 1,4-dihydroxy-2-naphthoate biosynthesis; 1,4-dihydroxy-2-naphthoate from chorismate: step 2/7. The protein operates within quinol/quinone metabolism; menaquinone biosynthesis. Functionally, catalyzes the thiamine diphosphate-dependent decarboxylation of 2-oxoglutarate and the subsequent addition of the resulting succinic semialdehyde-thiamine pyrophosphate anion to isochorismate to yield 2-succinyl-5-enolpyruvyl-6-hydroxy-3-cyclohexene-1-carboxylate (SEPHCHC). The protein is 2-succinyl-5-enolpyruvyl-6-hydroxy-3-cyclohexene-1-carboxylate synthase of Dechloromonas aromatica (strain RCB).